The following is a 363-amino-acid chain: Chorismate synthase (363 aa).

Arginine 48 is an NADP(+) binding site. FMN contacts are provided by residues 125–127 (RSS), 238–239 (NA), glycine 278, 293–297 (KPTAS), and arginine 319.

Belongs to the chorismate synthase family. Homotetramer. The cofactor is FMNH2.

The catalysed reaction is 5-O-(1-carboxyvinyl)-3-phosphoshikimate = chorismate + phosphate. The protein operates within metabolic intermediate biosynthesis; chorismate biosynthesis; chorismate from D-erythrose 4-phosphate and phosphoenolpyruvate: step 7/7. In terms of biological role, catalyzes the anti-1,4-elimination of the C-3 phosphate and the C-6 proR hydrogen from 5-enolpyruvylshikimate-3-phosphate (EPSP) to yield chorismate, which is the branch point compound that serves as the starting substrate for the three terminal pathways of aromatic amino acid biosynthesis. This reaction introduces a second double bond into the aromatic ring system. This chain is Chorismate synthase, found in Acinetobacter baylyi (strain ATCC 33305 / BD413 / ADP1).